A 294-amino-acid polypeptide reads, in one-letter code: uncharacterized protein (294 aa).

The segment at Asp181–Gln204 is disordered. Basic and acidic residues predominate over residues His190–Gln204.

This sequence belongs to the IIV-6 391R family.

This is an uncharacterized protein from Acheta domesticus (House cricket).